Consider the following 411-residue polypeptide: Class E basic helix-loop-helix protein 40 (411 aa).

The disordered stretch occupies residues 1–20; that stretch reads MERIPSAQPPPTCLPKAPGL. The interval 1–139 is essential for interaction with BMAL1, E-box binding and repressor activity against the CLOCK-BMAL1 heterodimer; it reads MERIPSAQPP…LSGRNLEAGQ (139 aa). The bHLH domain maps to 52 to 107; sequence TYKLPHRLIEKKRRDRINECIAQLKDLLPEHLKLTTLGHLEKAVVLELTLKHVKAL. The tract at residues 75-79 is necessary for interaction with RXRA and repressor activity against RXRA; the sequence is LKDLL. Positions 142-175 constitute an Orange domain; the sequence is FCSGFQTCAREVLQYLAKHENTRDLKSSQLVTHL. K159 participates in a covalent cross-link: Glycyl lysine isopeptide (Lys-Gly) (interchain with G-Cter in SUMO1, SUMO2 and SUMO3). A Glycyl lysine isopeptide (Lys-Gly) (interchain with G-Cter in SUMO2) cross-link involves residue K167. The segment at 227 to 294 is disordered; sequence FAPSGGEQSG…PPTKKSRMQL (68 aa). S235 is subject to Phosphoserine. The span at 248–271 shows a compositional bias: basic and acidic residues; sequence ELEKGDLRSEQPYFKSDHGRRFAV. K279 participates in a covalent cross-link: Glycyl lysine isopeptide (Lys-Gly) (interchain with G-Cter in SUMO1); alternate. K279 participates in a covalent cross-link: Glycyl lysine isopeptide (Lys-Gly) (interchain with G-Cter in SUMO1, SUMO2 and SUMO3); alternate. Residue K279 forms a Glycyl lysine isopeptide (Lys-Gly) (interchain with G-Cter in SUMO2); alternate linkage. K288 is covalently cross-linked (Glycyl lysine isopeptide (Lys-Gly) (interchain with G-Cter in SUMO2)). Residue S383 is modified to Phosphoserine.

In terms of assembly, homodimer. Heterodimer with BHLHE41/DEC2. Interacts with ubiquitin-conjugating enzyme UBE2I/UBC9. Interacts with HDAC1, SUMO1, RXRA and BMAL1. Interacts with TCF3/E47. Ubiquitinated; which may lead to proteasomal degradation. Post-translationally, sumoylation inhibits its ubiquitination and promotes its negative regulation of the CLOCK-BMAL1 heterodimer transcriptional activator activity.

It is found in the cytoplasm. The protein localises to the nucleus. In terms of biological role, transcriptional repressor involved in the regulation of the circadian rhythm by negatively regulating the activity of the clock genes and clock-controlled genes. Acts as the negative limb of a novel autoregulatory feedback loop (DEC loop) which differs from the one formed by the PER and CRY transcriptional repressors (PER/CRY loop). Both these loops are interlocked as it represses the expression of PER1/2 and in turn is repressed by PER1/2 and CRY1/2. Represses the activity of the circadian transcriptional activator: CLOCK-BMAL1|BMAL2 heterodimer by competing for the binding to E-box elements (5'-CACGTG-3') found within the promoters of its target genes. Negatively regulates its own expression and the expression of DBP and BHLHE41/DEC2. Acts as a corepressor of RXR and the RXR-LXR heterodimers and represses the ligand-induced RXRA and NR1H3/LXRA transactivation activity. May function as a transcriptional factor for neuronal differentiation. Represses the transcription of NR0B2 and attentuates the transactivation of NR0B2 by the CLOCK-BMAL1 complex. Drives the circadian rhythm of blood pressure through transcriptional repression of ATP1B1 in the cardiovascular system. This is Class E basic helix-loop-helix protein 40 (Bhlhe40) from Mus musculus (Mouse).